We begin with the raw amino-acid sequence, 156 residues long: Phosphopantetheine adenylyltransferase (156 aa).

A substrate-binding site is contributed by Thr-10. ATP is bound by residues 10–11 (TF) and His-18. Residues Lys-42, Leu-74, and Arg-88 each coordinate substrate. ATP contacts are provided by residues 89-91 (GLR), Glu-99, and 124-130 (NAFISSS).

Belongs to the bacterial CoaD family. Homohexamer. Mg(2+) serves as cofactor.

Its subcellular location is the cytoplasm. It carries out the reaction (R)-4'-phosphopantetheine + ATP + H(+) = 3'-dephospho-CoA + diphosphate. It participates in cofactor biosynthesis; coenzyme A biosynthesis; CoA from (R)-pantothenate: step 4/5. Functionally, reversibly transfers an adenylyl group from ATP to 4'-phosphopantetheine, yielding dephospho-CoA (dPCoA) and pyrophosphate. In Campylobacter concisus (strain 13826), this protein is Phosphopantetheine adenylyltransferase.